A 207-amino-acid polypeptide reads, in one-letter code: Histidine biosynthesis bifunctional protein HisIE (207 aa).

A phosphoribosyl-AMP cyclohydrolase region spans residues 1 to 117 (MQNFKELNEK…KISKNADFVF (117 aa)). The interval 118 to 207 (LARLEKLINA…ISKLKERHKA (90 aa)) is phosphoribosyl-ATP pyrophosphohydrolase.

The protein in the N-terminal section; belongs to the PRA-CH family. It in the C-terminal section; belongs to the PRA-PH family.

It localises to the cytoplasm. The enzyme catalyses 1-(5-phospho-beta-D-ribosyl)-ATP + H2O = 1-(5-phospho-beta-D-ribosyl)-5'-AMP + diphosphate + H(+). It carries out the reaction 1-(5-phospho-beta-D-ribosyl)-5'-AMP + H2O = 1-(5-phospho-beta-D-ribosyl)-5-[(5-phospho-beta-D-ribosylamino)methylideneamino]imidazole-4-carboxamide. The protein operates within amino-acid biosynthesis; L-histidine biosynthesis; L-histidine from 5-phospho-alpha-D-ribose 1-diphosphate: step 2/9. It functions in the pathway amino-acid biosynthesis; L-histidine biosynthesis; L-histidine from 5-phospho-alpha-D-ribose 1-diphosphate: step 3/9. This chain is Histidine biosynthesis bifunctional protein HisIE (hisI), found in Campylobacter jejuni subsp. jejuni serotype O:2 (strain ATCC 700819 / NCTC 11168).